Reading from the N-terminus, the 257-residue chain is MNLIAIPALIDNYIWLLHNKKGECLIVDPGDATPVLHILSNYQLKLTSILLTHHHPDHVKGVKLLSQYFPVTIYGPQETFKQCANIIVKKGDFLVLLEKKFAVLSFPGHTLGHIGFYSYPWLFCGDTVFSAGCGRIFEGTTKQMYESFQEVNQLSSHTLICCAHEYTLTNLAFASSLLPKDRIISSYQRHVTILRNKKKPSLPTKLSLERLINPFFRCHDINLHQAINFSPLLGCEWLVFDYLRQKRDNFRGNSSQK.

Zn(2+) contacts are provided by H53, H55, D57, H58, H109, D126, and H164.

Belongs to the metallo-beta-lactamase superfamily. Glyoxalase II family. In terms of assembly, monomer. Zn(2+) serves as cofactor.

The enzyme catalyses an S-(2-hydroxyacyl)glutathione + H2O = a 2-hydroxy carboxylate + glutathione + H(+). The protein operates within secondary metabolite metabolism; methylglyoxal degradation; (R)-lactate from methylglyoxal: step 2/2. Its function is as follows. Thiolesterase that catalyzes the hydrolysis of S-D-lactoyl-glutathione to form glutathione and D-lactic acid. This is Hydroxyacylglutathione hydrolase from Baumannia cicadellinicola subsp. Homalodisca coagulata.